Reading from the N-terminus, the 546-residue chain is Peroxisomal OPC-8:0-CoA ligase 1 (546 aa).

Residues Ser197, Ser198, Gly199, Thr200, Thr201, and Lys205 each coordinate ATP. Position 265 (Lys265) interacts with CoA. The segment at 267-338 is SBD1; that stretch reads EMHEMMSAIG…EKYPTVKILQ (72 aa). Gln338, Gly339, Thr343, Asp424, and Arg439 together coordinate ATP. The tract at residues 339 to 403 is SBD2; that stretch reads GYGLTESTGI…LKGPSIMKGY (65 aa). 2 residues coordinate CoA: Lys447 and Gly448. Lys530 contributes to the ATP binding site. Residues 544–546 carry the Microbody targeting signal motif; the sequence is SKL.

It belongs to the ATP-dependent AMP-binding enzyme family. It depends on Mg(2+) as a cofactor. Expressed at low levels in seedlings, cotyledons, leaves, hypocotyls and roots.

It is found in the peroxisome. The catalysed reaction is (9S,13S,15Z)-12-oxophyto-10,15-dienoate + ATP + CoA = (10Z,15Z)-12-oxophytodienoyl-CoA + AMP + diphosphate. The enzyme catalyses (1S,2S)-OPC-8 + ATP + CoA = OPC8-CoA + AMP + diphosphate. It catalyses the reaction hexadecanoate + ATP + CoA = hexadecanoyl-CoA + AMP + diphosphate. It carries out the reaction (9Z)-octadecenoate + ATP + CoA = (9Z)-octadecenoyl-CoA + AMP + diphosphate. The catalysed reaction is tetradecanoate + ATP + CoA = tetradecanoyl-CoA + AMP + diphosphate. The enzyme catalyses decanoate + ATP + CoA = decanoyl-CoA + AMP + diphosphate. It catalyses the reaction dodecanoate + ATP + CoA = dodecanoyl-CoA + AMP + diphosphate. It carries out the reaction octadecanoate + ATP + CoA = octadecanoyl-CoA + AMP + diphosphate. The catalysed reaction is OPC-6 + ATP + CoA = OPC-6-CoA + AMP + diphosphate. The enzyme catalyses dinor-OPDA + ATP + CoA = dinor-OPDA-CoA + AMP + diphosphate. In terms of biological role, contributes to jasmonic acid biosynthesis by initiating the beta-oxidative chain shortening of its precursors. Converts 12-oxo-phytodienoic acid (OPDA) and 3-oxo-2-(2'-pentenyl)-cyclopentane-1-octanoic acid (OPC-8:0) into OPDA-CoA and OPC-8:0-CoA, respectively. Follows a two-step reaction mechanism, wherein the carboxylate substrate first undergoes adenylation by ATP, followed by a thioesterification in the presence of CoA to yield the final CoA thioester. The protein is Peroxisomal OPC-8:0-CoA ligase 1 of Arabidopsis thaliana (Mouse-ear cress).